We begin with the raw amino-acid sequence, 209 residues long: MKVVEISHPMVKHKLGLMRAASISTQEFRRLTKEITSLLTYEVTAGFELEKTEILGWQGENIEIDQIKGKKLTVVPILRAGLGMMDGVFEHVPAAKVSMVGMYRDEKTAKPVAYFAKLCDKLDERVALIVDPMLATGGSMIATVSLLKKAGSKDIKIITLVSAPEGIDALAKAHPDVELYTASIDSHLNDKKYIIPGLGDAGDKIFGTK.

5-phospho-alpha-D-ribose 1-diphosphate is bound by residues Arg79, Arg104, and 131–139 (DPMLATGGS). Uracil contacts are provided by residues Ile194 and 199 to 201 (GDA). Asp200 is a binding site for 5-phospho-alpha-D-ribose 1-diphosphate.

Belongs to the UPRTase family. Mg(2+) serves as cofactor.

The enzyme catalyses UMP + diphosphate = 5-phospho-alpha-D-ribose 1-diphosphate + uracil. It functions in the pathway pyrimidine metabolism; UMP biosynthesis via salvage pathway; UMP from uracil: step 1/1. Its activity is regulated as follows. Allosterically activated by GTP. In terms of biological role, catalyzes the conversion of uracil and 5-phospho-alpha-D-ribose 1-diphosphate (PRPP) to UMP and diphosphate. The polypeptide is Uracil phosphoribosyltransferase (Francisella tularensis subsp. novicida (strain U112)).